Here is a 175-residue protein sequence, read N- to C-terminus: MEVPTLELKKFIRDIPDFPEKGIIFRDITPLLKNPEAFNFAIDQLVNKLKEIEFNTIVAPEARGFIFGGALAYKLGKGLVPVRKPGKLPYKVISEKYSLEYGEAELQMHIDAISQGEKVIIFDDVLATGGTALALKKLVEKAGGEVVSMAFLIELTYLNPRKLLSKENIISLITY.

Belongs to the purine/pyrimidine phosphoribosyltransferase family. Homodimer.

The protein resides in the cytoplasm. The enzyme catalyses AMP + diphosphate = 5-phospho-alpha-D-ribose 1-diphosphate + adenine. The protein operates within purine metabolism; AMP biosynthesis via salvage pathway; AMP from adenine: step 1/1. Its function is as follows. Catalyzes a salvage reaction resulting in the formation of AMP, that is energically less costly than de novo synthesis. This is Adenine phosphoribosyltransferase from Thermosipho melanesiensis (strain DSM 12029 / CIP 104789 / BI429).